Consider the following 269-residue polypeptide: D-aminoacyl-tRNA deacylase (269 aa).

The protein belongs to the DtdA deacylase family. Monomer. Zn(2+) serves as cofactor.

The enzyme catalyses a D-aminoacyl-tRNA + H2O = a tRNA + a D-alpha-amino acid + H(+). It catalyses the reaction glycyl-tRNA(Ala) + H2O = tRNA(Ala) + glycine + H(+). In terms of biological role, D-aminoacyl-tRNA deacylase with broad substrate specificity. By recycling D-aminoacyl-tRNA to D-amino acids and free tRNA molecules, this enzyme counteracts the toxicity associated with the formation of D-aminoacyl-tRNA entities in vivo. In Caldivirga maquilingensis (strain ATCC 700844 / DSM 13496 / JCM 10307 / IC-167), this protein is D-aminoacyl-tRNA deacylase.